The following is a 402-amino-acid chain: 26S proteasome regulatory subunit 8 (402 aa).

ATP is bound at residue 186 to 193; it reads GPPGTGKT.

This sequence belongs to the AAA ATPase family.

It is found in the cytoplasm. Its subcellular location is the nucleus. In terms of biological role, the 26S proteasome is involved in the ATP-dependent degradation of ubiquitinated proteins. The regulatory (or ATPase) complex confers ATP dependency and substrate specificity to the 26S complex. In Manduca sexta (Tobacco hawkmoth), this protein is 26S proteasome regulatory subunit 8.